The chain runs to 307 residues: 4-hydroxy-3-methylbut-2-enyl diphosphate reductase (307 aa).

Residue Cys13 participates in [4Fe-4S] cluster binding. (2E)-4-hydroxy-3-methylbut-2-enyl diphosphate is bound by residues His42 and His75. The dimethylallyl diphosphate site is built by His42 and His75. Isopentenyl diphosphate-binding residues include His42 and His75. Cys97 contributes to the [4Fe-4S] cluster binding site. His125 lines the (2E)-4-hydroxy-3-methylbut-2-enyl diphosphate pocket. Residue His125 participates in dimethylallyl diphosphate binding. His125 contacts isopentenyl diphosphate. The Proton donor role is filled by Glu127. Residue Thr165 participates in (2E)-4-hydroxy-3-methylbut-2-enyl diphosphate binding. [4Fe-4S] cluster is bound at residue Cys195. Residues Ser223, Ser224, Asn225, and Ser267 each coordinate (2E)-4-hydroxy-3-methylbut-2-enyl diphosphate. The dimethylallyl diphosphate site is built by Ser223, Ser224, Asn225, and Ser267. Residues Ser223, Ser224, Asn225, and Ser267 each contribute to the isopentenyl diphosphate site.

This sequence belongs to the IspH family. The cofactor is [4Fe-4S] cluster.

The catalysed reaction is isopentenyl diphosphate + 2 oxidized [2Fe-2S]-[ferredoxin] + H2O = (2E)-4-hydroxy-3-methylbut-2-enyl diphosphate + 2 reduced [2Fe-2S]-[ferredoxin] + 2 H(+). The enzyme catalyses dimethylallyl diphosphate + 2 oxidized [2Fe-2S]-[ferredoxin] + H2O = (2E)-4-hydroxy-3-methylbut-2-enyl diphosphate + 2 reduced [2Fe-2S]-[ferredoxin] + 2 H(+). It participates in isoprenoid biosynthesis; dimethylallyl diphosphate biosynthesis; dimethylallyl diphosphate from (2E)-4-hydroxy-3-methylbutenyl diphosphate: step 1/1. Its pathway is isoprenoid biosynthesis; isopentenyl diphosphate biosynthesis via DXP pathway; isopentenyl diphosphate from 1-deoxy-D-xylulose 5-phosphate: step 6/6. Catalyzes the conversion of 1-hydroxy-2-methyl-2-(E)-butenyl 4-diphosphate (HMBPP) into a mixture of isopentenyl diphosphate (IPP) and dimethylallyl diphosphate (DMAPP). Acts in the terminal step of the DOXP/MEP pathway for isoprenoid precursor biosynthesis. This Chlamydia trachomatis serovar L2b (strain UCH-1/proctitis) protein is 4-hydroxy-3-methylbut-2-enyl diphosphate reductase.